We begin with the raw amino-acid sequence, 227 residues long: Ubiquitin domain-containing protein 1 (227 aa).

The tract at residues 1 to 35 is disordered; that stretch reads MGNCVGRQRRERPAAPGHPRKRAGRNEPLKKERLK. The segment covering 24–35 has biased composition (basic and acidic residues); sequence GRNEPLKKERLK. The 76-residue stretch at 149–224 folds into the Ubiquitin-like domain; it reads FPLKVRLSTG…IQVIINQPPP (76 aa).

As to quaternary structure, interacts with UBTD1.

Functionally, may be involved in the regulation of cellular senescence through a positive feedback loop with TP53. Is a TP53 downstream target gene that increases the stability of TP53 protein by promoting the ubiquitination and degradation of MDM2. In Rattus norvegicus (Rat), this protein is Ubiquitin domain-containing protein 1 (Ubtd1).